The following is a 1034-amino-acid chain: Enteropeptidase (1034 aa).

The propeptide occupies 1–51; it reads MGSKRIIPSRHRSLSTYEVMFTALFAILMVLCAGLIAVSWLTIKGSEKDAA. Over 2 to 18 the chain is Cytoplasmic; sequence GSKRIIPSRHRSLSTYE. Residues 19–47 traverse the membrane as a helical; Signal-anchor for type II membrane protein segment; the sequence is VMFTALFAILMVLCAGLIAVSWLTIKGSE. Over 48-1034 the chain is Extracellular; the sequence is KDAALGKSHE…FTEWIQSFLH (987 aa). Positions 54–169 constitute an SEA domain; it reads KSHEARGTMK…NSIDITESLE (116 aa). Residues N116, N147, N170, and N194 are each glycosylated (N-linked (GlcNAc...) asparagine). Residues 197–238 form the LDL-receptor class A 1 domain; it reads IECLPGSRPCADALKCIAVDLFCDGELNCPDGSDEDSKICAT. Disulfide bonds link C199–C212, C206–C225, C219–C236, and C240–C268. The region spanning 240–349 is the CUB 1 domain; it reads CDGKFLLTES…IGFNATYTAF (110 aa). 9 N-linked (GlcNAc...) asparagine glycosylation sites follow: N283, N343, N350, N403, N455, N485, N518, N549, and N645. In terms of domain architecture, MAM spans 357 to 519; that stretch reads DEKINCNFED…ISLTYGICNV (163 aa). The cysteines at positions 539 and 567 are disulfide-linked. Residues 539–649 form the CUB 2 domain; sequence CGGPFELWEP…GGFKANFTTG (111 aa). The LDL-receptor class A 2 domain occupies 656–694; that stretch reads EPCKEDNFQCENGECVLLVNLCDGFSHCKDGSDEAHCVR. Intrachain disulfides connect C658-C670, C665-C683, and C677-C692. An SRCR domain is found at 693–786; it reads VRFLNGTANN…LILLQCNHKS (94 aa). N-linked (GlcNAc...) asparagine glycosylation is found at N697, N701, N721, N740, and N761. 6 disulfide bridges follow: C772/C782, C787/C911, C825/C841, C925/C992, C956/C971, and C982/C1010. A Peptidase S1 domain is found at 800 to 1034; it reads IVGGNDSREG…FTEWIQSFLH (235 aa). A glycan (N-linked (GlcNAc...) asparagine) is linked at N804. The Charge relay system role is filled by H840. N-linked (GlcNAc...) asparagine glycosylation is present at N863. The active-site Charge relay system is the D891. N-linked (GlcNAc...) asparagine glycans are attached at residues N902 and N964. S986 acts as the Charge relay system in catalysis.

It belongs to the peptidase S1 family. As to quaternary structure, heterotrimer of a catalytic (light) chain, a multidomain (heavy) chain, and a mini chain. Post-translationally, the chains are derived from a single precursor that is cleaved by a trypsin-like protease. The mini chain may be cleaved by elastase.

Its subcellular location is the membrane. It carries out the reaction Activation of trypsinogen by selective cleavage of 6-Lys-|-Ile-7 bond.. Functionally, responsible for initiating activation of pancreatic proteolytic proenzymes (trypsin, chymotrypsin and carboxypeptidase A). It catalyzes the conversion of trypsinogen to trypsin which in turn activates other proenzymes including chymotrypsinogen, procarboxypeptidases, and proelastases. The sequence is that of Enteropeptidase (TMPRSS15) from Sus scrofa (Pig).